The following is an 813-amino-acid chain: Protein mac-1 (813 aa).

Coiled-coil stretches lie at residues 58–89 (VREA…VQEI) and 122–152 (SDDS…TVLN). Disordered stretches follow at residues 97–131 (TRKR…ERAA) and 152–193 (NLYT…GAVS). Positions 158-172 (SAPSTPVSTPKNQAT) are enriched in polar residues. Low complexity predominate over residues 175–191 (PPGASAAPPALPRGLGA). ATP is bound by residues 246–253 (GPPGCGKT) and 575–582 (GPPGCGKT).

This sequence belongs to the AAA ATPase family. Found in a complex composed of ced-3, ced-4 and mac-1 or of ced-9, ced-4 and mac-1. Within the complex, interacts with ced-4.

Probably together with ced-9, plays a modest role in preventing ced-4 and caspase ced-3-mediated apoptosis. This chain is Protein mac-1, found in Caenorhabditis elegans.